The sequence spans 1669 residues: Collagen alpha-1(IV) chain (1669 aa).

A signal peptide spans Met1 to Ala27. Residues Lys28–Lys172 constitute a propeptide, N-terminal propeptide (7S domain). The disordered stretch occupies residues Gln47–Asp1443. Low complexity predominate over residues Thr92 to Asn104. N-linked (GlcNAc...) asparagine glycosylation occurs at Asn126. The triple-helical region stretch occupies residues Gly173–Pro1440. The segment covering Val196–Pro214 has biased composition (pro residues). 3-hydroxyproline is present on residues Pro204, Pro207, and Pro210. Over residues Gln234–Gln247 the composition is skewed to low complexity. The segment covering Pro289 to Arg298 has biased composition (basic and acidic residues). Residues Pro367–Pro376 are compositionally biased toward pro residues. The segment covering Thr377 to Pro387 has biased composition (low complexity). Composition is skewed to pro residues over residues Pro413–Gln424 and Pro436–Pro448. Residues Pro485–Pro494 show a composition bias toward low complexity. 2 stretches are compositionally biased toward basic and acidic residues: residues Lys497–Leu508 and Phe535–Asp545. Over residues Gly586–Gly595 the composition is skewed to gly residues. 3-hydroxyproline is present on residues Pro587 and Pro602. At Pro603 the chain carries 4-hydroxyproline. Position 605 is a 3-hydroxyproline (Pro605). 4-hydroxyproline is present on Pro606. Residues Ile611–Ala620 are compositionally biased toward low complexity. The span at Gly621–Gly630 shows a compositional bias: gly residues. 4-hydroxyproline occurs at positions 623, 626, 629, and 632. Pro647 is subject to 3-hydroxyproline. The segment covering Arg715–Lys731 has biased composition (low complexity). Gly residues predominate over residues Gly758–Gly767. Pro residues predominate over residues Pro784–Gly802. The segment covering Pro803–Gly817 has biased composition (gly residues). 2 stretches are compositionally biased toward low complexity: residues Ser847–Pro875 and Asp994–Ser1003. Over residues Gly1011–Gly1020 the composition is skewed to gly residues. Pro1214 carries the 3-hydroxyproline modification. Residues Gln1220 to Pro1230 show a composition bias toward low complexity. Residues Pro1247–Phe1258 show a composition bias toward pro residues. Residues Gly1290 to Gly1299 are compositionally biased toward gly residues. Composition is skewed to low complexity over residues Asp1333–Gln1343, Pro1368–Leu1391, and Pro1398–Pro1412. The span at Phe1413–Asp1428 shows a compositional bias: pro residues. The residue at position 1424 (Pro1424) is a 3-hydroxyproline. One can recognise a Collagen IV NC1 domain in the interval Gly1445–Thr1669. 6 disulfide bridges follow: Cys1460–Cys1551, Cys1493–Cys1548, Cys1505–Cys1511, Cys1570–Cys1665, Cys1604–Cys1662, and Cys1616–Cys1622. Met1533 is covalently cross-linked (S-Lysyl-methionine sulfilimine (Met-Lys) (interchain with K-1651)). An S-Lysyl-methionine sulfilimine (Lys-Met) (interchain with M-1533) cross-link involves residue Lys1651.

It belongs to the type IV collagen family. As to quaternary structure, there are six type IV collagen isoforms, alpha 1(IV)-alpha 6(IV), each of which can form a triple helix structure with 2 other chains to generate type IV collagen network. Interacts with EFEMP2. Lysines at the third position of the tripeptide repeating unit (G-X-Y) are hydroxylated. The modified lysines can be O-glycosylated. Post-translationally, contains 4-hydroxyproline. Prolines at the third position of the tripeptide repeating unit (G-X-Y) are hydroxylated in some or all of the chains. In terms of processing, contains 3-hydroxyproline. This modification occurs on the first proline residue in the sequence motif Gly-Pro-Hyp, where Hyp is 4-hydroxyproline. Type IV collagens contain numerous cysteine residues which are involved in inter- and intramolecular disulfide bonding. 12 of these, located in the NC1 domain, are conserved in all known type IV collagens. Post-translationally, the trimeric structure of the NC1 domains is stabilized by covalent bonds (sulfilimine cross-links) between Lys and Met residues. These cross-links are important for the mechanical stability of the basement membrane. Sulfilimine cross-link is catalyzed by PXDN. In terms of processing, proteolytic processing produces the C-terminal NC1 peptide, arresten. Detected in the basement membrane of the cornea (at protein level).

The protein localises to the secreted. The protein resides in the extracellular space. It is found in the extracellular matrix. Its subcellular location is the basement membrane. Functionally, type IV collagen is the major structural component of glomerular basement membranes (GBM), forming a 'chicken-wire' meshwork together with laminins, proteoglycans and entactin/nidogen. Arresten, comprising the C-terminal NC1 domain, inhibits angiogenesis and tumor formation. The C-terminal half is found to possess the anti-angiogenic activity. Specifically inhibits endothelial cell proliferation, migration and tube formation. This is Collagen alpha-1(IV) chain from Mus musculus (Mouse).